A 134-amino-acid chain; its full sequence is Phosphoribosyl-AMP cyclohydrolase (134 aa).

Asp-80 serves as a coordination point for Mg(2+). Cys-81 is a binding site for Zn(2+). Asp-82 and Asp-84 together coordinate Mg(2+). Cys-98 and Cys-105 together coordinate Zn(2+).

This sequence belongs to the PRA-CH family. Homodimer. It depends on Mg(2+) as a cofactor. Requires Zn(2+) as cofactor.

It localises to the cytoplasm. It carries out the reaction 1-(5-phospho-beta-D-ribosyl)-5'-AMP + H2O = 1-(5-phospho-beta-D-ribosyl)-5-[(5-phospho-beta-D-ribosylamino)methylideneamino]imidazole-4-carboxamide. The protein operates within amino-acid biosynthesis; L-histidine biosynthesis; L-histidine from 5-phospho-alpha-D-ribose 1-diphosphate: step 3/9. In terms of biological role, catalyzes the hydrolysis of the adenine ring of phosphoribosyl-AMP. The sequence is that of Phosphoribosyl-AMP cyclohydrolase from Bordetella bronchiseptica (strain ATCC BAA-588 / NCTC 13252 / RB50) (Alcaligenes bronchisepticus).